Consider the following 37-residue polypeptide: Cellular retinoic acid-binding protein 2 (37 aa).

Positions 21–31 match the Nuclear localization signal motif; sequence KALGVNMMLRK.

The protein belongs to the calycin superfamily. Fatty-acid binding protein (FABP) family. As to expression, embryo.

The protein resides in the cytoplasm. It is found in the endoplasmic reticulum. Its subcellular location is the nucleus. Functionally, transports retinoic acid to the nucleus. Regulates the access of retinoic acid to the nuclear retinoic acid receptors. The protein is Cellular retinoic acid-binding protein 2 (CRABP2) of Gallus gallus (Chicken).